Reading from the N-terminus, the 142-residue chain is Midkine-A (142 aa).

The signal sequence occupies residues 1 to 20; the sequence is MELRAFCVILLITVLAVSSQ. Intrachain disulfides connect C36-C60, C44-C69, C51-C73, C83-C115, and C93-C125.

This sequence belongs to the pleiotrophin family. In terms of tissue distribution, expression at the mid-gastrula stage begins in the neural anlage, and becomes increasingly prominent in the central nervous system and head mesenchyme during neurula stages. Although the mRNA is localized to the developing central nervous system (CNS), the protein is deposited at the neuromuscular junction (NMJ). In the tailbud stage embryo, expressed in the head and tail regions as well as in the CNS. In adults, expression is highest in the brain, eye and bone, with lower expression in the heart and lung. Not expressed in the ovary.

It localises to the secreted. In terms of biological role, secreted protein that functions as a cytokine and growth factor and mediates its signal through cell-surface proteoglycan and non-proteoglycan receptors. Binds cell-surface proteoglycan receptors via their chondroitin sulfate (CS) groups. Thereby regulates many processes like inflammatory response, cell proliferation, cell adhesion, cell growth, cell survival, tissue regeneration, cell differentiation and cell migration. Inhibits mesoderm formation and promotes neural formation during development. Plays a role in development of the neuromuscular junction (NMJ). Has antibacterial activity against both Gram-positive and Gram-negative bacteria. This is Midkine-A (mdk-a) from Xenopus laevis (African clawed frog).